The primary structure comprises 454 residues: Glutamyl-tRNA reductase (454 aa).

Substrate-binding positions include 50 to 53 (TCNR), Ser103, 108 to 110 (EDQ), and Gln114. The active-site Nucleophile is the Cys51. 182-187 (GAGEMG) contacts NADP(+). Residues 407-454 (LFDPNFGGDTPQPDRPDDIPRAAERGDISGDDLPDDVPNHIAEKVSDG) form a disordered region. 2 stretches are compositionally biased toward basic and acidic residues: residues 418–434 (QPDR…RGDI) and 443–454 (VPNHIAEKVSDG).

Belongs to the glutamyl-tRNA reductase family. As to quaternary structure, homodimer.

It carries out the reaction (S)-4-amino-5-oxopentanoate + tRNA(Glu) + NADP(+) = L-glutamyl-tRNA(Glu) + NADPH + H(+). The protein operates within porphyrin-containing compound metabolism; protoporphyrin-IX biosynthesis; 5-aminolevulinate from L-glutamyl-tRNA(Glu): step 1/2. Its function is as follows. Catalyzes the NADPH-dependent reduction of glutamyl-tRNA(Glu) to glutamate 1-semialdehyde (GSA). This is Glutamyl-tRNA reductase from Haloquadratum walsbyi (strain DSM 16790 / HBSQ001).